The sequence spans 469 residues: Interstitial collagenase (469 aa).

Residues 1 to 18 (MPRLPLLLLLLWGTGSHG) form the signal peptide. The propeptide at 19 to 99 (FPAATSETQE…PRCGVPDVAP (81 aa)) is activation peptide. Residues 90 to 97 (PRCGVPDV) carry the Cysteine switch motif. Cys-92 contributes to the Zn(2+) binding site. Asn-120 is a glycosylation site (N-linked (GlcNAc...) asparagine). Ca(2+)-binding residues include Asp-124 and Asp-158. Residues His-168 and Asp-170 each coordinate Zn(2+). Ca(2+) is bound by residues Asp-175, Gly-176, Gly-178, and Asn-180. Zn(2+) is bound at residue His-183. Ca(2+)-binding residues include Gly-190, Gly-192, and Asp-194. His-196 serves as a coordination point for Zn(2+). Asp-198, Asp-199, and Glu-201 together coordinate Ca(2+). His-218 is a binding site for Zn(2+). Glu-219 is an active-site residue. Zn(2+) is bound by residues His-222 and His-228. Phosphothreonine is present on Thr-274. Hemopexin repeat units lie at residues 275–324 (PEVC…WPQL), 325–371 (PNGL…FGFP), 374–422 (VKSI…FPGI), and 423–466 (GNKV…WFNC). The cysteines at positions 278 and 466 are disulfide-linked. Ca(2+) is bound by residues Asp-285 and Gln-329. Tyr-360 carries the post-translational modification Phosphotyrosine; by PKDCC. Residues Asp-378 and Asp-427 each coordinate Ca(2+).

It belongs to the peptidase M10A family. The cofactor is Ca(2+). Zn(2+) is required as a cofactor. Tyrosine phosphorylated in platelets by PKDCC/VLK.

Its subcellular location is the secreted. It localises to the extracellular space. The protein resides in the extracellular matrix. It carries out the reaction Cleavage of the triple helix of collagen at about three-quarters of the length of the molecule from the N-terminus, at 775-Gly-|-Ile-776 in the alpha1(I) chain. Cleaves synthetic substrates and alpha-macroglobulins at bonds where P1' is a hydrophobic residue.. With respect to regulation, can be activated without removal of the activation peptide. Its function is as follows. Cleaves collagens of types I, II, and III at one site in the helical domain. Also cleaves collagens of types VII and X. The protein is Interstitial collagenase (MMP1) of Bos taurus (Bovine).